Consider the following 292-residue polypeptide: Mycothiol acetyltransferase (292 aa).

2 consecutive N-acetyltransferase domains span residues 2–138 (AEVV…PSAP) and 141–292 (VTVR…YAHS). Residue E33 participates in 1D-myo-inositol 2-(L-cysteinylamino)-2-deoxy-alpha-D-glucopyranoside binding. Residue 68 to 70 (AVV) coordinates acetyl-CoA. 1D-myo-inositol 2-(L-cysteinylamino)-2-deoxy-alpha-D-glucopyranoside-binding residues include E168, K215, and E225. Acetyl-CoA-binding positions include 229-231 (VAV) and 236-242 (QGRGLGR). Residue Y263 coordinates 1D-myo-inositol 2-(L-cysteinylamino)-2-deoxy-alpha-D-glucopyranoside. Residue 268–273 (NAAALH) participates in acetyl-CoA binding.

Belongs to the acetyltransferase family. MshD subfamily. In terms of assembly, monomer.

It carries out the reaction 1D-myo-inositol 2-(L-cysteinylamino)-2-deoxy-alpha-D-glucopyranoside + acetyl-CoA = mycothiol + CoA + H(+). In terms of biological role, catalyzes the transfer of acetyl from acetyl-CoA to desacetylmycothiol (Cys-GlcN-Ins) to form mycothiol. The chain is Mycothiol acetyltransferase from Tsukamurella paurometabola (strain ATCC 8368 / DSM 20162 / CCUG 35730 / CIP 100753 / JCM 10117 / KCTC 9821 / NBRC 16120 / NCIMB 702349 / NCTC 13040) (Corynebacterium paurometabolum).